A 391-amino-acid polypeptide reads, in one-letter code: 3-ketoacyl-CoA thiolase (391 aa).

Cysteine 95 acts as the Acyl-thioester intermediate in catalysis. Active-site proton acceptor residues include histidine 347 and cysteine 377.

This sequence belongs to the thiolase-like superfamily. Thiolase family. As to quaternary structure, heterotetramer of two alpha chains (FadB) and two beta chains (FadA).

It localises to the cytoplasm. It carries out the reaction an acyl-CoA + acetyl-CoA = a 3-oxoacyl-CoA + CoA. It participates in lipid metabolism; fatty acid beta-oxidation. Catalyzes the final step of fatty acid oxidation in which acetyl-CoA is released and the CoA ester of a fatty acid two carbons shorter is formed. The polypeptide is 3-ketoacyl-CoA thiolase (Pseudomonas fluorescens (strain Pf0-1)).